Reading from the N-terminus, the 119-residue chain is Holo-[acyl-carrier-protein] synthase (119 aa).

Residues D6 and E51 each contribute to the Mg(2+) site.

It belongs to the P-Pant transferase superfamily. AcpS family. Requires Mg(2+) as cofactor.

Its subcellular location is the cytoplasm. The catalysed reaction is apo-[ACP] + CoA = holo-[ACP] + adenosine 3',5'-bisphosphate + H(+). Its function is as follows. Transfers the 4'-phosphopantetheine moiety from coenzyme A to a Ser of acyl-carrier-protein. The polypeptide is Holo-[acyl-carrier-protein] synthase (Sulfurovum sp. (strain NBC37-1)).